Reading from the N-terminus, the 100-residue chain is NADH-quinone oxidoreductase subunit K (100 aa).

3 helical membrane passes run 2–22, 29–49, and 63–83; these read ITLSHYLVVAALMFVLGLIGI, IMLFFSSEILLNAANVALAAI, and LFIVAVAASEVAVGLGLLILW.

The protein belongs to the complex I subunit 4L family. In terms of assembly, NDH-1 is composed of 14 different subunits. Subunits NuoA, H, J, K, L, M, N constitute the membrane sector of the complex.

Its subcellular location is the cell inner membrane. The enzyme catalyses a quinone + NADH + 5 H(+)(in) = a quinol + NAD(+) + 4 H(+)(out). In terms of biological role, NDH-1 shuttles electrons from NADH, via FMN and iron-sulfur (Fe-S) centers, to quinones in the respiratory chain. The immediate electron acceptor for the enzyme in this species is believed to be ubiquinone. Couples the redox reaction to proton translocation (for every two electrons transferred, four hydrogen ions are translocated across the cytoplasmic membrane), and thus conserves the redox energy in a proton gradient. The chain is NADH-quinone oxidoreductase subunit K from Campylobacter curvus (strain 525.92).